The following is a 299-amino-acid chain: Pentalenolactone F synthase (299 aa).

His105 and Asp107 together coordinate Fe cation. Positions 133 and 251 each coordinate 2-oxoglutarate. Fe cation is bound at residue His266. Arg277 is a 2-oxoglutarate binding site.

This sequence belongs to the TfdA dioxygenase family. Fe(2+) is required as a cofactor.

It catalyses the reaction pentalenolactone D + 2 2-oxoglutarate + 2 O2 = pentalenolactone F + 2 succinate + 2 CO2 + H2O. It functions in the pathway antibiotic biosynthesis; pentalenolactone biosynthesis. Its activity is regulated as follows. Activated by ascorbate. Functionally, catalyzes the Fe(2+) and alpha-ketoglutarate-dependent oxidation of pentalenolactone D to pentalenolactone F in the biosynthesis of pentalenolactone antibiotic. Also able to catalyze the oxidation of pentalenolactone D to pentalenolactone E. This chain is Pentalenolactone F synthase (pntD), found in Streptomyces arenae.